Here is a 298-residue protein sequence, read N- to C-terminus: Phosphatidylglycerol--prolipoprotein diacylglyceryl transferase (298 aa).

3 consecutive transmembrane segments (helical) span residues 17 to 37 (LAVR…IVVG), 59 to 79 (MMFY…VLFY), and 97 to 117 (GGMS…LFAW). An a 1,2-diacyl-sn-glycero-3-phospho-(1'-sn-glycerol)-binding site is contributed by Arg142. 2 helical membrane passes run 230–250 (MGAI…TVEF) and 257–277 (FLGL…PMIV).

The protein belongs to the Lgt family.

It is found in the cell inner membrane. The catalysed reaction is L-cysteinyl-[prolipoprotein] + a 1,2-diacyl-sn-glycero-3-phospho-(1'-sn-glycerol) = an S-1,2-diacyl-sn-glyceryl-L-cysteinyl-[prolipoprotein] + sn-glycerol 1-phosphate + H(+). The protein operates within protein modification; lipoprotein biosynthesis (diacylglyceryl transfer). Catalyzes the transfer of the diacylglyceryl group from phosphatidylglycerol to the sulfhydryl group of the N-terminal cysteine of a prolipoprotein, the first step in the formation of mature lipoproteins. In Burkholderia cenocepacia (strain ATCC BAA-245 / DSM 16553 / LMG 16656 / NCTC 13227 / J2315 / CF5610) (Burkholderia cepacia (strain J2315)), this protein is Phosphatidylglycerol--prolipoprotein diacylglyceryl transferase.